Consider the following 259-residue polypeptide: Thiazole synthase (259 aa).

Catalysis depends on K99, which acts as the Schiff-base intermediate with DXP. 1-deoxy-D-xylulose 5-phosphate-binding positions include G161, 187-188 (AG), and 209-210 (NT).

It belongs to the ThiG family. As to quaternary structure, homotetramer. Forms heterodimers with either ThiH or ThiS.

It is found in the cytoplasm. It catalyses the reaction [ThiS sulfur-carrier protein]-C-terminal-Gly-aminoethanethioate + 2-iminoacetate + 1-deoxy-D-xylulose 5-phosphate = [ThiS sulfur-carrier protein]-C-terminal Gly-Gly + 2-[(2R,5Z)-2-carboxy-4-methylthiazol-5(2H)-ylidene]ethyl phosphate + 2 H2O + H(+). It functions in the pathway cofactor biosynthesis; thiamine diphosphate biosynthesis. Functionally, catalyzes the rearrangement of 1-deoxy-D-xylulose 5-phosphate (DXP) to produce the thiazole phosphate moiety of thiamine. Sulfur is provided by the thiocarboxylate moiety of the carrier protein ThiS. In vitro, sulfur can be provided by H(2)S. This Sulfurimonas denitrificans (strain ATCC 33889 / DSM 1251) (Thiomicrospira denitrificans (strain ATCC 33889 / DSM 1251)) protein is Thiazole synthase.